We begin with the raw amino-acid sequence, 104 residues long: L-rhamnose mutarotase (104 aa).

Y18 serves as a coordination point for substrate. Residue H22 is the Proton donor of the active site. Residues Y41 and 76–77 each bind substrate; that span reads WW.

The protein belongs to the rhamnose mutarotase family. In terms of assembly, homodimer.

It localises to the cytoplasm. It carries out the reaction alpha-L-rhamnose = beta-L-rhamnose. It participates in carbohydrate metabolism; L-rhamnose metabolism. Functionally, involved in the anomeric conversion of L-rhamnose. This Acidiphilium cryptum (strain JF-5) protein is L-rhamnose mutarotase.